Here is a 382-residue protein sequence, read N- to C-terminus: Alkanesulfonate monooxygenase (382 aa).

It belongs to the SsuD family.

It carries out the reaction an alkanesulfonate + FMNH2 + O2 = an aldehyde + FMN + sulfite + H2O + 2 H(+). Functionally, catalyzes the desulfonation of aliphatic sulfonates. The chain is Alkanesulfonate monooxygenase from Pseudomonas putida (strain ATCC 47054 / DSM 6125 / CFBP 8728 / NCIMB 11950 / KT2440).